The sequence spans 865 residues: Xylosyltransferase 2 (865 aa).

The Cytoplasmic segment spans residues 1-15; the sequence is MVASARVQKLVRRYK. A helical; Signal-anchor for type II membrane protein transmembrane segment spans residues 16 to 36; the sequence is LAIATALAILLLQGLVVWSFS. The Lumenal portion of the chain corresponds to 37-865; it reads GLEEDEPGEK…GPVKADGRLR (829 aa). Residues 39-155 form a disordered region; it reads EEDEPGEKGR…SVEGAPQPTD (117 aa). Basic and acidic residues predominate over residues 53–65; the sequence is RPLDPGEGSKDTD. Residues 73–82 show a composition bias toward basic residues; sequence SAGRRHGRWR. The N-linked (GlcNAc...) asparagine glycan is linked to asparagine 122. 4 disulfides stabilise this stretch: cysteine 162-cysteine 190, cysteine 206-cysteine 448, cysteine 467-cysteine 480, and cysteine 469-cysteine 478. UDP-alpha-D-xylose contacts are provided by residues valine 239, aspartate 267, and 296 to 298; that span reads TIW. Asparagine 327 carries N-linked (GlcNAc...) asparagine glycosylation. 400 to 401 provides a ligand contact to UDP-alpha-D-xylose; that stretch reads DW. UDP-alpha-D-xylose is bound by residues serine 481 and 504–505; that span reads RK. Intrachain disulfides connect cysteine 581–cysteine 833 and cysteine 826–cysteine 839. The N-linked (GlcNAc...) asparagine glycan is linked to asparagine 683.

It belongs to the glycosyltransferase 14 family. XylT subfamily. Monomer. The cofactor is Mg(2+). Mn(2+) serves as cofactor. Contains disulfide bonds. In terms of tissue distribution, detected in brain, liver, lung, kidney, heart, spleen and testis, and at lower levels in skeletal muscle.

The protein resides in the golgi apparatus membrane. It is found in the secreted. It carries out the reaction UDP-alpha-D-xylose + L-seryl-[protein] = 3-O-(beta-D-xylosyl)-L-seryl-[protein] + UDP + H(+). It functions in the pathway glycan metabolism; chondroitin sulfate biosynthesis. The protein operates within glycan metabolism; heparan sulfate biosynthesis. Its function is as follows. Catalyzes the first step in the biosynthesis of chondroitin sulfate, heparan sulfate and dermatan sulfate proteoglycans, such as DCN. Transfers D-xylose from UDP-D-xylose to specific serine residues of the core protein. In Mus musculus (Mouse), this protein is Xylosyltransferase 2 (Xylt2).